The primary structure comprises 518 residues: 3-octaprenyl-4-hydroxybenzoate carboxy-lyase (518 aa).

Position 177 (N177) interacts with Mn(2+). Prenylated FMN contacts are provided by residues I180–R182, R194–L196, and R199–G200. E243 contacts Mn(2+). The active-site Proton donor is D318.

Belongs to the UbiD family. As to quaternary structure, homohexamer. Prenylated FMN serves as cofactor. The cofactor is Mn(2+).

It localises to the cell membrane. The enzyme catalyses a 4-hydroxy-3-(all-trans-polyprenyl)benzoate + H(+) = a 2-(all-trans-polyprenyl)phenol + CO2. It functions in the pathway cofactor biosynthesis; ubiquinone biosynthesis. Its function is as follows. Catalyzes the decarboxylation of 3-octaprenyl-4-hydroxy benzoate to 2-octaprenylphenol, an intermediate step in ubiquinone biosynthesis. In Burkholderia multivorans (strain ATCC 17616 / 249), this protein is 3-octaprenyl-4-hydroxybenzoate carboxy-lyase.